The primary structure comprises 530 residues: Glucose-6-phosphate isomerase (530 aa).

Residue Glu356 is the Proton donor of the active site. Active-site residues include His387 and Lys502.

Belongs to the GPI family.

The protein localises to the cytoplasm. The catalysed reaction is alpha-D-glucose 6-phosphate = beta-D-fructose 6-phosphate. Its pathway is carbohydrate biosynthesis; gluconeogenesis. It participates in carbohydrate degradation; glycolysis; D-glyceraldehyde 3-phosphate and glycerone phosphate from D-glucose: step 2/4. Catalyzes the reversible isomerization of glucose-6-phosphate to fructose-6-phosphate. This chain is Glucose-6-phosphate isomerase, found in Borrelia garinii subsp. bavariensis (strain ATCC BAA-2496 / DSM 23469 / PBi) (Borreliella bavariensis).